A 195-amino-acid polypeptide reads, in one-letter code: Nicotinamide riboside kinase 1 (195 aa).

ATP is bound at residue Gly10 to Thr18. The Mg(2+) site is built by Thr17 and Asp36. The active-site Proton acceptor is Asp36. Substrate is bound by residues Asp36–Phe39 and Tyr55–Asp56. Residue Arg128 participates in ATP binding. Substrate-binding positions include Arg129 and Tyr134–Glu135. Residues Arg132–Tyr134 and Arg172–Glu174 each bind ATP.

Belongs to the uridine kinase family. NRK subfamily. As to quaternary structure, monomer.

It catalyses the reaction beta-nicotinamide D-riboside + ATP = beta-nicotinamide D-ribonucleotide + ADP + H(+). The enzyme catalyses beta-D-ribosylnicotinate + ATP = nicotinate beta-D-ribonucleotide + ADP + H(+). Its pathway is cofactor biosynthesis; NAD(+) biosynthesis. Functionally, catalyzes the phosphorylation of nicotinamide riboside (NR) and nicotinic acid riboside (NaR) to form nicotinamide mononucleotide (NMN) and nicotinic acid mononucleotide (NaMN). The polypeptide is Nicotinamide riboside kinase 1 (Nmrk1) (Rattus norvegicus (Rat)).